The following is a 226-amino-acid chain: Uracil-DNA glycosylase (226 aa).

D64 functions as the Proton acceptor in the catalytic mechanism.

It belongs to the uracil-DNA glycosylase (UDG) superfamily. UNG family.

Its subcellular location is the cytoplasm. The catalysed reaction is Hydrolyzes single-stranded DNA or mismatched double-stranded DNA and polynucleotides, releasing free uracil.. Excises uracil residues from the DNA which can arise as a result of misincorporation of dUMP residues by DNA polymerase or due to deamination of cytosine. This is Uracil-DNA glycosylase from Vibrio cholerae serotype O1 (strain ATCC 39541 / Classical Ogawa 395 / O395).